A 512-amino-acid polypeptide reads, in one-letter code: Centrosomal protein CCDC61 (512 aa).

Methionine 1 is subject to N-acetylmethionine. The head domain stretch occupies residues 1–143; that stretch reads MDQPAGLQVD…PLPLPYQGKP (143 aa). 2 coiled-coil regions span residues 178–205 and 248–275; these read IWHL…SREE and CRRL…LTSE. The segment at 276–477 is disordered; sequence LALYKRGRRT…KSLANSGGWV (202 aa). Position 285 is a phosphothreonine (threonine 285). Over residues 293–306 the composition is skewed to basic and acidic residues; the sequence is TREDRASSSRERSA. 4 positions are modified to phosphoserine: serine 334, serine 336, serine 373, and serine 376. Residues 407 to 425 are compositionally biased toward low complexity; it reads RSSSVDSFRSRCSSASSCS. Phosphoserine is present on residues serine 447 and serine 473.

Belongs to the CCDC61 family. In terms of assembly, forms homodimers (via head domain). Interacts with CEP170. Interacts with PCM1 and CEP131. Binds tubulin.

Its subcellular location is the cytoplasm. The protein resides in the cytoskeleton. It localises to the microtubule organizing center. The protein localises to the centrosome. It is found in the centriolar satellite. Its subcellular location is the cilium basal body. Microtubule-binding centrosomal protein required for centriole cohesion, independently of the centrosome-associated protein/CEP250 and rootletin/CROCC linker. In interphase, required for anchoring microtubule at the mother centriole subdistal appendages and for centrosome positioning. During mitosis, may be involved in spindle assembly and chromatin alignment by regulating the organization of spindle microtubules into a symmetrical structure. Has been proposed to play a role in CEP170 recruitment to centrosomes. However, this function could not be confirmed. Plays a non-essential role in ciliogenesis. The polypeptide is Centrosomal protein CCDC61 (Homo sapiens (Human)).